A 459-amino-acid chain; its full sequence is tRNA modification GTPase MnmE (459 aa).

(6S)-5-formyl-5,6,7,8-tetrahydrofolate contacts are provided by Arg-24, Glu-82, and Lys-122. The TrmE-type G domain occupies Gly-219–Lys-379. GTP is bound by residues Asn-229–Ser-234, Thr-248–Thr-254, and Asp-273–Gly-276. Mg(2+) contacts are provided by Ser-233 and Thr-254. (6S)-5-formyl-5,6,7,8-tetrahydrofolate is bound at residue Lys-459.

Belongs to the TRAFAC class TrmE-Era-EngA-EngB-Septin-like GTPase superfamily. TrmE GTPase family. In terms of assembly, homodimer. Heterotetramer of two MnmE and two MnmG subunits. It depends on K(+) as a cofactor.

It localises to the cytoplasm. Functionally, exhibits a very high intrinsic GTPase hydrolysis rate. Involved in the addition of a carboxymethylaminomethyl (cmnm) group at the wobble position (U34) of certain tRNAs, forming tRNA-cmnm(5)s(2)U34. In Buchnera aphidicola subsp. Baizongia pistaciae (strain Bp), this protein is tRNA modification GTPase MnmE.